The following is a 292-amino-acid chain: 2,3-dihydroxybenzoate decarboxylase (292 aa).

Cys-263 is an active-site residue.

The protein belongs to the metallo-dependent hydrolases superfamily. As to quaternary structure, homotetramer.

It catalyses the reaction 2,3-dihydroxybenzoate + H(+) = catechol + CO2. It functions in the pathway aromatic compound metabolism; benzoate degradation via hydroxylation. This is 2,3-dihydroxybenzoate decarboxylase from Aspergillus niger.